The following is a 142-amino-acid chain: Endoribonuclease YbeY (142 aa).

Zn(2+) is bound by residues His-100, His-104, and His-110.

Belongs to the endoribonuclease YbeY family. Requires Zn(2+) as cofactor.

Its subcellular location is the cytoplasm. Single strand-specific metallo-endoribonuclease involved in late-stage 70S ribosome quality control and in maturation of the 3' terminus of the 16S rRNA. The sequence is that of Endoribonuclease YbeY from Helicobacter pylori (strain G27).